Consider the following 78-residue polypeptide: Acyl carrier protein (78 aa).

Residues 2–77 (STIEESVKSI…AAIDFIKESK (76 aa)) enclose the Carrier domain. Serine 37 is modified (O-(pantetheine 4'-phosphoryl)serine).

This sequence belongs to the acyl carrier protein (ACP) family. In terms of processing, 4'-phosphopantetheine is transferred from CoA to a specific serine of apo-ACP by AcpS. This modification is essential for activity because fatty acids are bound in thioester linkage to the sulfhydryl of the prosthetic group.

It is found in the cytoplasm. It functions in the pathway lipid metabolism; fatty acid biosynthesis. Carrier of the growing fatty acid chain in fatty acid biosynthesis. The sequence is that of Acyl carrier protein from Wigglesworthia glossinidia brevipalpis.